The chain runs to 127 residues: Anti-adapter protein IraD (127 aa).

This sequence belongs to the GpW/Gp25 family. IraD subfamily. In terms of assembly, interacts with RssB.

It localises to the cytoplasm. Inhibits RpoS proteolysis by regulating RssB activity, thereby increasing the stability of the sigma stress factor RpoS during oxidative stress. Its effect on RpoS stability is due to its interaction with RssB, which probably blocks the interaction of RssB with RpoS, and the consequent delivery of the RssB-RpoS complex to the ClpXP protein degradation pathway. This Escherichia coli (strain UTI89 / UPEC) protein is Anti-adapter protein IraD.